Reading from the N-terminus, the 1061-residue chain is Transmembrane protease serine 9 (1061 aa).

The Cytoplasmic portion of the chain corresponds to 3–31 (PAAPDLQPVPEVTKGVPVPTPDSGCCRAA). A helical transmembrane segment spans residues 32–52 (VTTVVAISVASLTLGVLSAFL). Topologically, residues 53-1061 (SAQGVQVEHT…LGWIGQNIRE (1009 aa)) are extracellular. One can recognise an LDL-receptor class A domain in the interval 155 to 192 (HCPGNAFSCQNSQCVSKENPECDDRVDCSDGSDEAQCD). 4 cysteine pairs are disulfide-bonded: Cys-156/Cys-168, Cys-163/Cys-182, Cys-176/Cys-191, and Cys-230/Cys-246. One can recognise a Peptidase S1 1 domain in the interval 205–438 (IVGGAEAAPG…LRDWILEVTS (234 aa)). Residues His-245 and Asp-294 each act as charge relay system in the active site. 3 disulfide bridges follow: Cys-328-Cys-395, Cys-360-Cys-374, and Cys-385-Cys-414. Catalysis depends on Ser-389, which acts as the Charge relay system. Residues 443–499 (PVVPTEAPAPITPSTPWPTSPESRVPNTTAKPTVAPTPAPLHPSTAAKPQECGARPA) are disordered. Residues 452–461 (PITPSTPWPT) are compositionally biased toward pro residues. Residues 462–476 (SPESRVPNTTAKPTV) show a composition bias toward low complexity. Asn-469 carries an N-linked (GlcNAc...) asparagine glycan. Positions 506 to 738 (IVGGISAVSG…LKDWILKAMS (233 aa)) constitute a Peptidase S1 2 domain. Residues Cys-531 and Cys-547 are joined by a disulfide bond. His-546 acts as the Charge relay system in catalysis. Asn-549 carries N-linked (GlcNAc...) asparagine glycosylation. Catalysis depends on Asp-594, which acts as the Charge relay system. Disulfide bonds link Cys-628-Cys-695, Cys-660-Cys-674, and Cys-685-Cys-714. N-linked (GlcNAc...) asparagine glycosylation is found at Asn-640 and Asn-665. The active-site Charge relay system is the Ser-689. Low complexity predominate over residues 740 to 752 (DPSSTAHPHTSST). Disordered regions lie at residues 740–771 (DPSS…IPEA) and 790–810 (LNTT…APGT). Asn-791 is a glycosylation site (N-linked (GlcNAc...) asparagine). The span at 792–808 (TTLSARSTTTRRQTPAP) shows a compositional bias: low complexity. Residues 830–1060 (IVGGSAASLG…VLGWIGQNIR (231 aa)) form the Peptidase S1 3 domain. Intrachain disulfides connect Cys-856–Cys-872, Cys-951–Cys-1017, Cys-982–Cys-996, and Cys-1007–Cys-1036.

It belongs to the peptidase S1 family. In terms of processing, proteolytically cleaved to generate 3 independent serine protease chains. The cleaved chains may remain attached to the membrane thanks to disulfide bonds. It is unclear whether cleavage always takes place.

Its subcellular location is the cell membrane. Its activity is regulated as follows. Inhibited by serine protease inhibitors PMSF and 4-(2-aminoethyl)benzenesulfonyl fluoride, but not by EDTA. Its function is as follows. Serase-1 and serase-2 are serine proteases that hydrolyze the peptides N-t-Boc-Gln-Ala-Arg-AMC and N-t-Boc-Gln-Gly-Arg-AMC. In contrast, N-t-Boc-Ala-Phe-Lys-AMC and N-t-Boc-Ala-Pro-Ala-AMC are not significantly hydrolyzed. In Rattus norvegicus (Rat), this protein is Transmembrane protease serine 9 (Tmprss9).